A 313-amino-acid polypeptide reads, in one-letter code: Ras-related GTP-binding protein A (313 aa).

Residues serine 16, glycine 17, glycine 19, lysine 20, threonine 21, serine 22, threonine 36, threonine 42, glycine 65, and histidine 127 each contribute to the GTP site. GDP-binding residues include glycine 17, glycine 19, lysine 20, threonine 21, and serine 22. GDP contacts are provided by histidine 127 and aspartate 130. Residue lysine 142 forms a Glycyl lysine isopeptide (Lys-Gly) (interchain with G-Cter in ubiquitin) linkage. GDP contacts are provided by leucine 148 and isoleucine 164. Isoleucine 164 is a binding site for GTP. Residues lysine 220, lysine 230, and lysine 244 each participate in a glycyl lysine isopeptide (Lys-Gly) (interchain with G-Cter in ubiquitin) cross-link. A Phosphoserine modification is found at serine 309.

The protein belongs to the GTR/RAG GTP-binding protein family. Can occur as a homodimer or as a heterodimer with RRAGC or RRAGD in a sequence-independent manner; heterodimerization stabilizes proteins of the heterodimer. The GTP-bound form of RRAGA (in complex with the GDP-bound form of RRAGC or RRAGD) interacts with RPTOR, thereby promoting recruitment of mTORC1 to the lysosomes. The Rag heterodimer interacts with SLC38A9; the probable amino acid sensor. The Rag heterodimer interacts with the Ragulator complex. The GTP-bound form of RRAGA interacts with NOL8. Component of the lysosomal folliculin complex (LFC), composed of FLCN, FNIP1 (or FNIP2), RagA/RRAGA or RagB/RRAGB GDP-bound, RagC/RRAGC or RagD/RRAGD GTP-bound, and Ragulator. Interacts with SH3BP4; the interaction with this negative regulator is most probably direct, preferentially occurs with the inactive GDP-bound form of RRAGA and is negatively regulated by amino acids. Interacts (polyubiquitinated) with TSC2. Interacts with SESN1, SESN2 and SESN3. Interacts with PIP4P1. Interacts with GPR137B. Interacts with WDR83; this interaction regulates the spatiotemporal localization of mTORC1 to the lysosomal surface. In terms of processing, polybiquitinated via 'Lys-63'-linked polyubiquitination by RNF152 in response to amino acid starvation: polyubiquitination of the GDP-bound inactive form by RNF152 promotes RRAGA inactivation and interaction with the GATOR1 complex. This does not affect RRAGA degradation.

It is found in the cytoplasm. It localises to the nucleus. The protein localises to the lysosome membrane. It carries out the reaction GTP + H2O = GDP + phosphate + H(+). Its activity is regulated as follows. The activation of GTP-binding proteins is generally mediated by a guanine exchange factor (GEF), while inactivation through hydrolysis of bound GTP is catalyzed by a GTPase activating protein (GAP). The Ragulator complex functions as a GEF and promotes the active GTP-bound form. The GATOR1 complex functions as a GAP and stimulates RRAGA GTPase activity to turn it into its inactive GDP-bound form, preventing mTORC1 recruitment and activation. Its function is as follows. Guanine nucleotide-binding protein that plays a crucial role in the cellular response to amino acid availability through regulation of the mTORC1 signaling cascade. Forms heterodimeric Rag complexes with RagC/RRAGC or RagD/RRAGD and cycles between an inactive GDP-bound and an active GTP-bound form: RagA/RRAGA is in its active form when GTP-bound RagA/RRAGA forms a complex with GDP-bound RagC/RRAGC (or RagD/RRAGD) and in an inactive form when GDP-bound RagA/RRAGA heterodimerizes with GTP-bound RagC/RRAGC (or RagD/RRAGD). In its GTP-bound active form, promotes the recruitment of mTORC1 to the lysosomes and its subsequent activation by the GTPase RHEB. Involved in the RCC1/Ran-GTPase pathway. May play a direct role in a TNF-alpha signaling pathway leading to induction of cell death. The sequence is that of Ras-related GTP-binding protein A from Bos taurus (Bovine).